Consider the following 202-residue polypeptide: Securin (202 aa).

Positions 1–92 (MATLIYVDKE…QKQPSFSAKK (92 aa)) are disordered. N-acetylalanine is present on Ala-2. The short motif at 61–64 (RKAL) is the D-box element. 2 consecutive short sequence motifs (TEK-box) follow at residues 71 to 73 (TEK) and 94 to 96 (TEK). An SH3-binding motif is present at residues 163–173 (XPSPVKMPSPP). Residue Ser-165 is modified to Phosphoserine; by CDK1.

The protein belongs to the securin family. In terms of assembly, interacts with RPS10 and DNAJA1. Interacts with the caspase-like ESPL1, and prevents its protease activity probably by covering its active site. Interacts with TP53 and blocks its activity probably by blocking its binding to DNA. Interacts with the Ku 70 kDa subunit of ds-DNA kinase. Interacts with PTTG1IP. Post-translationally, phosphorylated at Ser-165 by CDK1 during mitosis. In terms of processing, phosphorylated in vitro by ds-DNA kinase. Ubiquitinated through 'Lys-11' linkage of ubiquitin moieties by the anaphase promoting complex (APC) at the onset of anaphase, conducting to its degradation. 'Lys-11'-linked ubiquitination is mediated by the E2 ligase UBE2C/UBCH10.

It localises to the cytoplasm. The protein localises to the nucleus. Functionally, regulatory protein, which plays a central role in chromosome stability, in the p53/TP53 pathway, and DNA repair. Probably acts by blocking the action of key proteins. During the mitosis, it blocks Separase/ESPL1 function, preventing the proteolysis of the cohesin complex and the subsequent segregation of the chromosomes. At the onset of anaphase, it is ubiquitinated, conducting to its destruction and to the liberation of ESPL1. Its function is however not limited to a blocking activity, since it is required to activate ESPL1. Negatively regulates the transcriptional activity and related apoptosis activity of TP53. The negative regulation of TP53 may explain the strong transforming capability of the protein when it is overexpressed. May also play a role in DNA repair via its interaction with Ku, possibly by connecting DNA damage-response pathways with sister chromatid separation. The protein is Securin (PTTG1) of Pan troglodytes (Chimpanzee).